A 167-amino-acid chain; its full sequence is Ubiquitin-conjugating enzyme E2 14 (167 aa).

Ala2 is modified (N-acetylalanine). A UBC core domain is found at 5–165 (QASLLLQKQL…VSRCVRRSQE (161 aa)). Cys90 serves as the catalytic Glycyl thioester intermediate.

Belongs to the ubiquitin-conjugating enzyme family.

The catalysed reaction is S-ubiquitinyl-[E1 ubiquitin-activating enzyme]-L-cysteine + [E2 ubiquitin-conjugating enzyme]-L-cysteine = [E1 ubiquitin-activating enzyme]-L-cysteine + S-ubiquitinyl-[E2 ubiquitin-conjugating enzyme]-L-cysteine.. The protein operates within protein modification; protein ubiquitination. Its function is as follows. Accepts the ubiquitin from the E1 complex and catalyzes its covalent attachment to other proteins. Involved in the formation of multiubiquitin chains. Signal the protein for selective degradation. This chain is Ubiquitin-conjugating enzyme E2 14 (UBC14), found in Arabidopsis thaliana (Mouse-ear cress).